We begin with the raw amino-acid sequence, 377 residues long: N-acetylgalactosamine-6-phosphate deacetylase (377 aa).

Glu125 contributes to the a divalent metal cation binding site. 136–137 serves as a coordination point for substrate; sequence AH. A divalent metal cation is bound by residues His191 and His212. Residues 215–216, Arg223, and 244–247 contribute to the substrate site; these read NG and DGHH. Residue Asp269 is the Proton donor/acceptor of the active site. Residue 302–304 coordinates substrate; the sequence is LAG.

It belongs to the metallo-dependent hydrolases superfamily. NagA family. Requires a divalent metal cation as cofactor.

The catalysed reaction is N-acetyl-D-galactosamine 6-phosphate + H2O = D-galactosamine 6-phosphate + acetate. Functionally, catalyzes the deacetylation of N-acetyl-D-galactosamine 6-phosphate to D-galactosamine 6-phosphate. Can probably also catalyze the deacetylation of N-acetyl-D-glucosamine 6-phosphate to D-glucosamine 6-phosphate. The polypeptide is N-acetylgalactosamine-6-phosphate deacetylase (agaA) (Escherichia coli O157:H7).